A 324-amino-acid polypeptide reads, in one-letter code: Adenine deaminase (324 aa).

Residues H8, H10, and H186 each coordinate Zn(2+). E189 serves as the catalytic Proton donor. D267 provides a ligand contact to Zn(2+). Substrate is bound at residue D268.

The protein belongs to the metallo-dependent hydrolases superfamily. Adenosine and AMP deaminases family. Adenine deaminase type 2 subfamily. Zn(2+) is required as a cofactor.

It carries out the reaction adenine + H2O + H(+) = hypoxanthine + NH4(+). Its function is as follows. Catalyzes the hydrolytic deamination of adenine to hypoxanthine. Plays an important role in the purine salvage pathway and in nitrogen catabolism. This chain is Adenine deaminase, found in Mesorhizobium japonicum (strain LMG 29417 / CECT 9101 / MAFF 303099) (Mesorhizobium loti (strain MAFF 303099)).